We begin with the raw amino-acid sequence, 406 residues long: Phosphatidylserine decarboxylase proenzyme, mitochondrial (406 aa).

A mitochondrion-targeting transit peptide spans 1-49 (MAVAGGRGCVRSLREGVLWRSSPCHCDYTATRHFLGALQKLPLQAWVRK). Over 50–60 (VHTAPLRTLFL) the chain is Mitochondrial matrix. A helical transmembrane segment spans residues 61–79 (LRPVPILLAAGGGYAGYRQ). The Mitochondrial intermembrane segment spans residues 80 to 406 (YEKYRERQLE…ILFGEALGSL (327 aa)). Residues Asp-188, His-264, and Ser-375 each act as charge relay system; for autoendoproteolytic cleavage activity in the active site. The active-site Schiff-base intermediate with substrate; via pyruvic acid; for decarboxylase activity is Ser-375. Pyruvic acid (Ser); by autocatalysis is present on Ser-375.

The protein belongs to the phosphatidylserine decarboxylase family. PSD-B subfamily. Eukaryotic type I sub-subfamily. As to quaternary structure, heterodimer of a large membrane-associated beta subunit and a small pyruvoyl-containing alpha subunit. It depends on pyruvate as a cofactor. Is synthesized initially as an inactive proenzyme. Formation of the active enzyme involves a self-maturation process in which the active site pyruvoyl group is generated from an internal serine residue via an autocatalytic post-translational modification. Two non-identical subunits are generated from the proenzyme in this reaction, and the pyruvate is formed at the N-terminus of the alpha chain, which is derived from the carboxyl end of the proenzyme. The autoendoproteolytic cleavage occurs by a canonical serine protease mechanism, in which the side chain hydroxyl group of the serine supplies its oxygen atom to form the C-terminus of the beta chain, while the remainder of the serine residue undergoes an oxidative deamination to produce ammonia and the pyruvoyl prosthetic group on the alpha chain. During this reaction, the Ser that is part of the protease active site of the proenzyme becomes the pyruvoyl prosthetic group, which constitutes an essential element of the active site of the mature decarboxylase.

It localises to the mitochondrion inner membrane. Its subcellular location is the cytoplasm. It is found in the lipid droplet. It catalyses the reaction a 1,2-diacyl-sn-glycero-3-phospho-L-serine + H(+) = a 1,2-diacyl-sn-glycero-3-phosphoethanolamine + CO2. Its pathway is phospholipid metabolism; phosphatidylethanolamine biosynthesis. With respect to regulation, inhibited by hydroxylamine. Its function is as follows. Catalyzes the formation of phosphatidylethanolamine (PtdEtn) from phosphatidylserine (PtdSer). Plays a central role in phospholipid metabolism and in the interorganelle trafficking of phosphatidylserine. May be involved in lipid droplet biogenesis at the endoplasmic reticulum membrane. In Rattus norvegicus (Rat), this protein is Phosphatidylserine decarboxylase proenzyme, mitochondrial.